We begin with the raw amino-acid sequence, 168 residues long: uncharacterized protein (168 aa).

Residues 1–21 (MVYEVLAVVSGGLLGFGVTWA) form the signal peptide.

This is an uncharacterized protein from Archaeoglobus fulgidus (strain ATCC 49558 / DSM 4304 / JCM 9628 / NBRC 100126 / VC-16).